The following is a 725-amino-acid chain: 1,4-alpha-glucan branching enzyme GlgB (725 aa).

Asp-406 (nucleophile) is an active-site residue. Glu-459 serves as the catalytic Proton donor.

Belongs to the glycosyl hydrolase 13 family. GlgB subfamily. As to quaternary structure, monomer.

The catalysed reaction is Transfers a segment of a (1-&gt;4)-alpha-D-glucan chain to a primary hydroxy group in a similar glucan chain.. The protein operates within glycan biosynthesis; glycogen biosynthesis. Functionally, catalyzes the formation of the alpha-1,6-glucosidic linkages in glycogen by scission of a 1,4-alpha-linked oligosaccharide from growing alpha-1,4-glucan chains and the subsequent attachment of the oligosaccharide to the alpha-1,6 position. The chain is 1,4-alpha-glucan branching enzyme GlgB from Methylobacillus flagellatus (strain ATCC 51484 / DSM 6875 / VKM B-1610 / KT).